The sequence spans 1732 residues: Serine/threonine-protein kinase MRCK alpha (1732 aa).

The Protein kinase domain maps to 77 to 343 (FEILKVIGRG…IEDFKKHPFF (267 aa)). ATP-binding positions include 83–91 (IGRGAFGEV) and lysine 106. Aspartate 201 serves as the catalytic Proton acceptor. Phosphoserine; by autocatalysis is present on residues serine 222 and serine 234. Threonine 240 bears the Phosphothreonine; by autocatalysis mark. An AGC-kinase C-terminal domain is found at 344 to 414 (SGIDWDNIRN…TSSCVLSDRS (71 aa)). 3 coiled-coil regions span residues 437–670 (NNLA…KQKQ), 713–820 (SEIK…WEAQ), and 880–943 (LELQ…SEKG). A disordered region spans residues 973–1002 (CTPAGKGRRIADSAPLPVHTPTLRKKGCPA). Residues 1012-1062 (THQFFVKSFTAPTKCHQCTSLMVGLIRQGCSCEVCGFSCHITCVNKAPTTC) form a Phorbol-ester/DAG-type zinc finger. The PH domain maps to 1082 to 1201 (GTAYEGHVRI…WVGVLSELHK (120 aa)). A Phosphoserine modification is found at serine 1127. Residues 1227-1499 (IKTTQAAAII…RPLNTEGSLN (273 aa)) enclose the CNH domain. Serine 1545 is subject to Phosphoserine. In terms of domain architecture, CRIB spans 1571-1584 (ISNPTNFNHIAHMG). The segment at 1592–1732 (LKDLPMNPRP…ESTDRGSWDP (141 aa)) is disordered. The span at 1604–1619 (SRTVFSGSVSIPSITK) shows a compositional bias: polar residues. 9 positions are modified to phosphoserine: serine 1611, serine 1613, serine 1629, serine 1651, serine 1664, serine 1669, serine 1693, serine 1719, and serine 1721. A compositionally biased stretch (low complexity) spans 1625-1640 (GRSMSASSGLSARSSA). Over residues 1665–1674 (PSEGSLSSGG) the composition is skewed to low complexity.

It belongs to the protein kinase superfamily. AGC Ser/Thr protein kinase family. DMPK subfamily. In terms of assembly, homodimer and homotetramer via the coiled coil regions. Interacts tightly with GTP-bound but not GDP-bound CDC42. Forms a tripartite complex with MYO18A and LURAP1 with the latter acting as an adapter connecting CDC42BPA and MYO18A. LURAP1 binding results in activation of CDC42BPA by abolition of its negative autoregulation. Interacts with LURAP1. Interacts (via AGC-kinase C-terminal domain) with FAM89B/LRAP25 (via LRR repeat). Forms a tripartite complex with FAM89B/LRAP25 and LIMK1. Mg(2+) is required as a cofactor. In terms of processing, proteolytically cleaved by caspases upon apoptosis induction. The cleavage at Asp-478 by CASP3 increases its kinase activity (in vitro). As to expression, highly expressed in the brain and lung and present in lower levels in all other tissues tested.

It localises to the cytoplasm. The protein resides in the cell projection. Its subcellular location is the lamellipodium. It catalyses the reaction L-seryl-[protein] + ATP = O-phospho-L-seryl-[protein] + ADP + H(+). The catalysed reaction is L-threonyl-[protein] + ATP = O-phospho-L-threonyl-[protein] + ADP + H(+). Its activity is regulated as follows. Maintained in an inactive, closed conformation by an interaction between the kinase domain and the negative autoregulatory C-terminal coiled-coil region. Agonist binding to the phorbol ester binding site disrupts this, releasing the kinase domain to allow N-terminus-mediated dimerization and kinase activation by transautophosphorylation. Inhibited by chelerythrine chloride. Functionally, serine/threonine-protein kinase which is an important downstream effector of CDC42 and plays a role in the regulation of cytoskeleton reorganization and cell migration. Regulates actin cytoskeletal reorganization via phosphorylation of PPP1R12A and MYL9/MLC2. In concert with MYO18A and LURAP1, is involved in modulating lamellar actomyosin retrograde flow that is crucial to cell protrusion and migration. Phosphorylates: PPP1R12C, LIMK1 and LIMK2. May play a role in TFRC-mediated iron uptake. In concert with FAM89B/LRAP25 mediates the targeting of LIMK1 to the lamellipodium resulting in its activation and subsequent phosphorylation of CFL1 which is important for lamellipodial F-actin regulation. Triggers the formation of an extrusion apical actin ring required for epithelial extrusion of apoptotic cells. The chain is Serine/threonine-protein kinase MRCK alpha from Rattus norvegicus (Rat).